Here is an 840-residue protein sequence, read N- to C-terminus: Heat shock 70 kDa protein 4 (840 aa).

Residue lysine 53 is modified to N6-acetyllysine. Serine 76 carries the post-translational modification Phosphoserine. 2 positions are modified to phosphotyrosine: tyrosine 89 and tyrosine 336. Phosphoserine occurs at positions 393 and 415. Lysine 430 bears the N6-acetyllysine mark. The tract at residues 500 to 575 (VHKSEENEEP…QAKKAKVKTS (76 aa)) is disordered. Residues 514-533 (QNAKEEEKMQVDQEEPHVEE) show a composition bias toward basic and acidic residues. Threonine 538 is subject to Phosphothreonine. Phosphoserine is present on residues serine 546 and serine 647. Tyrosine 660 carries the phosphotyrosine modification. The residue at position 679 (lysine 679) is an N6-acetyllysine. Serine 756 carries the post-translational modification Phosphoserine. Lysine 773 is modified (N6-methyllysine). The tract at residues 783–840 (ISKPKPKVEPPKEEQKNAEQNGPVDGQGDNPGPQAAEQGTDAAVPSDSDKKLPEMDID) is disordered. 2 stretches are compositionally biased toward basic and acidic residues: residues 788 to 799 (PKVEPPKEEQKN) and 829 to 840 (DSDKKLPEMDID).

The protein belongs to the heat shock protein 70 family. As to quaternary structure, interacts with TJP1/ZO-1.

Its subcellular location is the cytoplasm. In Pongo abelii (Sumatran orangutan), this protein is Heat shock 70 kDa protein 4 (HSPA4).